The primary structure comprises 365 residues: Peptide chain release factor 2 (365 aa).

N5-methylglutamine is present on glutamine 252.

This sequence belongs to the prokaryotic/mitochondrial release factor family. In terms of processing, methylated by PrmC. Methylation increases the termination efficiency of RF2.

The protein resides in the cytoplasm. Its function is as follows. Peptide chain release factor 2 directs the termination of translation in response to the peptide chain termination codons UGA and UAA. The sequence is that of Peptide chain release factor 2 from Tolumonas auensis (strain DSM 9187 / NBRC 110442 / TA 4).